The following is a 175-amino-acid chain: Cytidylate kinase (175 aa).

Residue Gly-7–Ser-15 coordinates ATP.

This sequence belongs to the cytidylate kinase family. Type 2 subfamily.

It is found in the cytoplasm. The enzyme catalyses CMP + ATP = CDP + ADP. The catalysed reaction is dCMP + ATP = dCDP + ADP. The chain is Cytidylate kinase from Methanocella arvoryzae (strain DSM 22066 / NBRC 105507 / MRE50).